A 456-amino-acid polypeptide reads, in one-letter code: GTPase Der (456 aa).

EngA-type G domains lie at 2 to 167 and 176 to 351; these read LKVA…DQFG and ATFC…AQLK. Residues 8–15, 55–59, 118–121, 182–189, 229–233, and 294–297 contribute to the GTP site; these read GKPNVGKS, DTGGL, NKIE, DTAGI, and NKWD. Positions 352–436 constitute a KH-like domain; the sequence is IKISTSLLND…PITLYFKSKN (85 aa).

This sequence belongs to the TRAFAC class TrmE-Era-EngA-EngB-Septin-like GTPase superfamily. EngA (Der) GTPase family. In terms of assembly, associates with the 50S ribosomal subunit.

Its function is as follows. GTPase that plays an essential role in the late steps of ribosome biogenesis. This Mycoplasmoides gallisepticum (strain R(low / passage 15 / clone 2)) (Mycoplasma gallisepticum) protein is GTPase Der.